Consider the following 341-residue polypeptide: Cysteine-rich repeat secretory protein 1 (341 aa).

Positions 1 to 25 (MFSLPLHQSKLIFLLSFLLIKTLNA) are cleaved as a signal peptide. Gnk2-homologous domains lie at 28–131 (TYLL…SRKI) and 136–245 (DQGP…ATFL). 4 disulfides stabilise this stretch: cysteine 85–cysteine 94, cysteine 97–cysteine 122, cysteine 199–cysteine 208, and cysteine 211–cysteine 236. The segment covering 247–262 (PPPPPPPPPPPPPPPQ) has biased composition (pro residues). Positions 247-274 (PPPPPPPPPPPPPPPQRLYGENDTPSSD) are disordered.

It belongs to the cysteine-rich repeat secretory protein family.

It is found in the secreted. This Arabidopsis thaliana (Mouse-ear cress) protein is Cysteine-rich repeat secretory protein 1 (CRRSP1).